Reading from the N-terminus, the 190-residue chain is Adenine phosphoribosyltransferase (190 aa).

The protein belongs to the purine/pyrimidine phosphoribosyltransferase family. Homodimer.

The protein localises to the cytoplasm. It catalyses the reaction AMP + diphosphate = 5-phospho-alpha-D-ribose 1-diphosphate + adenine. It participates in purine metabolism; AMP biosynthesis via salvage pathway; AMP from adenine: step 1/1. In terms of biological role, catalyzes a salvage reaction resulting in the formation of AMP, that is energically less costly than de novo synthesis. In Cupriavidus metallidurans (strain ATCC 43123 / DSM 2839 / NBRC 102507 / CH34) (Ralstonia metallidurans), this protein is Adenine phosphoribosyltransferase.